The chain runs to 521 residues: Bifunctional purine biosynthesis protein PurH (521 aa).

Residues 1 to 145 (MIKQALISVS…KNHKDVIVIC (145 aa)) form the MGS-like domain.

This sequence belongs to the PurH family.

The enzyme catalyses (6R)-10-formyltetrahydrofolate + 5-amino-1-(5-phospho-beta-D-ribosyl)imidazole-4-carboxamide = 5-formamido-1-(5-phospho-D-ribosyl)imidazole-4-carboxamide + (6S)-5,6,7,8-tetrahydrofolate. The catalysed reaction is IMP + H2O = 5-formamido-1-(5-phospho-D-ribosyl)imidazole-4-carboxamide. The protein operates within purine metabolism; IMP biosynthesis via de novo pathway; 5-formamido-1-(5-phospho-D-ribosyl)imidazole-4-carboxamide from 5-amino-1-(5-phospho-D-ribosyl)imidazole-4-carboxamide (10-formyl THF route): step 1/1. It participates in purine metabolism; IMP biosynthesis via de novo pathway; IMP from 5-formamido-1-(5-phospho-D-ribosyl)imidazole-4-carboxamide: step 1/1. The chain is Bifunctional purine biosynthesis protein PurH from Herminiimonas arsenicoxydans.